The following is a 290-amino-acid chain: Small ribosomal subunit biogenesis GTPase RsgA (290 aa).

The CP-type G domain maps to 62–213 (KNSLVRPPIV…IADTPGFSSL (152 aa)). GTP-binding positions include 111 to 114 (SKLD) and 156 to 164 (GQTGVGKST). Residues cysteine 237, cysteine 242, histidine 244, and cysteine 250 each coordinate Zn(2+).

Belongs to the TRAFAC class YlqF/YawG GTPase family. RsgA subfamily. In terms of assembly, monomer. Associates with 30S ribosomal subunit, binds 16S rRNA. Requires Zn(2+) as cofactor.

The protein resides in the cytoplasm. Its function is as follows. One of several proteins that assist in the late maturation steps of the functional core of the 30S ribosomal subunit. Helps release RbfA from mature subunits. May play a role in the assembly of ribosomal proteins into the subunit. Circularly permuted GTPase that catalyzes slow GTP hydrolysis, GTPase activity is stimulated by the 30S ribosomal subunit. The chain is Small ribosomal subunit biogenesis GTPase RsgA from Streptococcus agalactiae serotype III (strain NEM316).